The sequence spans 364 residues: Protein IncC (364 aa).

Basic and acidic residues-rich tracts occupy residues 1–10 (MGVIHEETAY), 26–42 (ADHR…EATG), and 89–100 (HRPEVGSGRQEK). Disordered regions lie at residues 1-63 (MGVI…ASRV) and 75-102 (VRAG…EKTG).

Belongs to the ParA family.

In terms of biological role, this is one of the proteins encoded by the trfB operon; it is involved in plasmid maintenance and replication. The polypeptide is Protein IncC (incC) (Escherichia coli).